Consider the following 229-residue polypeptide: Lipoprotein-releasing system ATP-binding protein LolD (229 aa).

The region spanning 9–228 (HGLRKIYREA…QDGNLVQVEV (220 aa)) is the ABC transporter domain. An ATP-binding site is contributed by 42–49 (GSSGSGKS).

It belongs to the ABC transporter superfamily. Lipoprotein translocase (TC 3.A.1.125) family. In terms of assembly, the complex is composed of two ATP-binding proteins (LolD) and two transmembrane proteins (LolC and LolE).

Its subcellular location is the cell inner membrane. Its function is as follows. Part of the ABC transporter complex LolCDE involved in the translocation of mature outer membrane-directed lipoproteins, from the inner membrane to the periplasmic chaperone, LolA. Responsible for the formation of the LolA-lipoprotein complex in an ATP-dependent manner. This chain is Lipoprotein-releasing system ATP-binding protein LolD, found in Photobacterium profundum (strain SS9).